Consider the following 501-residue polypeptide: Glycerol kinase (501 aa).

Position 12 (Thr-12) interacts with ADP. 3 residues coordinate ATP: Thr-12, Thr-13, and Ser-14. A sn-glycerol 3-phosphate-binding site is contributed by Thr-12. Residue Arg-16 participates in ADP binding. Sn-glycerol 3-phosphate is bound by residues Arg-82, Glu-83, Tyr-135, and Asp-244. Residues Arg-82, Glu-83, Tyr-135, Asp-244, and Gln-245 each coordinate glycerol. Residues Thr-266, Gly-309, Gly-409, and Asn-413 each contribute to the ADP site. ATP-binding residues include Thr-266, Gly-309, and Gly-409.

Belongs to the FGGY kinase family.

The catalysed reaction is glycerol + ATP = sn-glycerol 3-phosphate + ADP + H(+). It participates in polyol metabolism; glycerol degradation via glycerol kinase pathway; sn-glycerol 3-phosphate from glycerol: step 1/1. Inhibited by fructose 1,6-bisphosphate (FBP). In terms of biological role, key enzyme in the regulation of glycerol uptake and metabolism. Catalyzes the phosphorylation of glycerol to yield sn-glycerol 3-phosphate. This chain is Glycerol kinase, found in Coxiella burnetii (strain RSA 331 / Henzerling II).